The sequence spans 388 residues: Pentatricopeptide repeat-containing protein 2, mitochondrial (388 aa).

A PPR repeat occupies 166-200 (TSFNILMDMLFIKGKYKSALQVLIEMKNQDVKFTK). Serine 382 is subject to Phosphoserine.

It belongs to the PTCD2 family.

The protein localises to the mitochondrion. Its function is as follows. Involved in mitochondrial RNA maturation and mitochondrial respiratory chain function. The protein is Pentatricopeptide repeat-containing protein 2, mitochondrial (PTCD2) of Homo sapiens (Human).